The primary structure comprises 536 residues: CBS domain-containing protein CBSCBSPB2 (536 aa).

The span at 1–23 (MTTTPTSSGRRSISSIRRTSSAS) shows a compositional bias: low complexity. Positions 1 to 60 (MTTTPTSSGRRSISSIRRTSSASKKPVLQSEESESGSGSINENTSKPDSPLAQPVSDGER) are disordered. CBS domains are found at residues 66–124 (RLSK…LRPE), 132–187 (MTRN…RMEK), 228–287 (VTEN…LSPE), and 295–354 (MTPN…NNSS). The PB1 domain occupies 406-489 (VSSFAFKFED…KVLRLHLDFT (84 aa)). A helical membrane pass occupies residues 509-529 (VWWQTGVLAGAIVLTSIGLFV).

Its subcellular location is the membrane. This Arabidopsis thaliana (Mouse-ear cress) protein is CBS domain-containing protein CBSCBSPB2 (CBSCBSPB2).